We begin with the raw amino-acid sequence, 573 residues long: Patellin-1 (573 aa).

2 disordered regions span residues 1–74 (MAQE…SVKE) and 111–202 (REFT…DGTK). A2 is modified (N-acetylalanine). Positions 18–28 (VKEKPITDKEV) are enriched in basic and acidic residues. T29 bears the Phosphothreonine mark. Basic and acidic residues predominate over residues 35-74 (AEKEEVAAPVSDEKAVPEKEVTPEKEAPAAEAEKSVSVKE). A coiled-coil region spans residues 89 to 157 (AEEVQKKALE…TTEVKVEEEK (69 aa)). T118 carries the post-translational modification Phosphothreonine. Basic and acidic residues-rich tracts occupy residues 120–169 (VKEE…EKSS) and 176–190 (TKSE…EVTT). S195 carries the phosphoserine modification. K285 participates in a covalent cross-link: Glycyl lysine isopeptide (Lys-Gly) (interchain with G-Cter in ubiquitin). The CRAL-TRIO domain maps to 295-468 (SGEEVSEFEK…KYGGLSKDTP (174 aa)). The 102-residue stretch at 471 to 572 (EETITEAIVK…KKKVLYRFKT (102 aa)) folds into the GOLD domain.

This sequence belongs to the patellin family. In terms of assembly, interacts with the deubiquitinating enzyme AMSH3. In terms of tissue distribution, expressed ubiquitously with higher levels in expanding roots and leaves (at protein level).

It localises to the membrane. The protein localises to the cytoplasm. In terms of biological role, carrier protein that may be involved in membrane-trafficking events associated with cell plate formation during cytokinesis. Binds to some hydrophobic molecules and promotes their transfer between the different cellular sites. Binds to phosphoinositides with a preference for PtdIns(5)P, PtdIns(4,5)P2 and PtdIns(3)P. In Arabidopsis thaliana (Mouse-ear cress), this protein is Patellin-1 (PATL1).